Consider the following 104-residue polypeptide: BLOC-1-related complex subunit 7 (104 aa).

This sequence belongs to the BORCS7 family.

The protein localises to the lysosome membrane. Its function is as follows. As part of a BORC-like complex may play a role in lysosomes movement and localization at the cell periphery. Associated with the cytosolic face of lysosomes, this complex may couple lysosomes to microtubule plus-end-directed kinesin motor. The protein is BLOC-1-related complex subunit 7 of Xenopus tropicalis (Western clawed frog).